The primary structure comprises 262 residues: Hemin import ATP-binding protein HmuV (262 aa).

One can recognise an ABC transporter domain in the interval 1 to 247 (MRNLTLQRGR…ERIKQIFAFD (247 aa)). 31–38 (GPNGTGKS) serves as a coordination point for ATP.

The protein belongs to the ABC transporter superfamily. Heme (hemin) importer (TC 3.A.1.14.5) family. The complex is composed of two ATP-binding proteins (HmuV), two transmembrane proteins (HmuU) and a solute-binding protein (HmuT).

It is found in the cell inner membrane. Part of the ABC transporter complex HmuTUV involved in hemin import. Responsible for energy coupling to the transport system. This chain is Hemin import ATP-binding protein HmuV, found in Plesiomonas shigelloides (Aeromonas shigelloides).